A 196-amino-acid chain; its full sequence is UMP-CMP kinase (196 aa).

An ATP-binding site is contributed by 13-18; that stretch reads GAGKGT. The residue at position 33 (serine 33) is a Phosphoserine. The segment at 33-63 is NMP; sequence SAGELLRDERKNPDSQYGELIEKYIKDGKIV. Arginine 39 contributes to the a ribonucleoside 5'-phosphate binding site. N6-acetyllysine occurs at positions 43 and 55. A ribonucleoside 5'-phosphate contacts are provided by residues 61–63 and 93–96; these read KIV and GFPR. A CMP-binding site is contributed by asparagine 100. At lysine 106 the chain carries N6-succinyllysine. Positions 133–143 are LID; the sequence is ERGKSSGRSDD. Residue arginine 134 coordinates ATP. A ribonucleoside 5'-phosphate is bound by residues arginine 140 and arginine 151. Lysine 179 serves as a coordination point for ATP. Serine 180 is modified (phosphoserine).

This sequence belongs to the adenylate kinase family. UMP-CMP kinase subfamily. As to quaternary structure, monomer. Requires Mg(2+) as cofactor.

The protein localises to the nucleus. It is found in the cytoplasm. It catalyses the reaction CMP + ATP = CDP + ADP. The catalysed reaction is dCMP + ATP = dCDP + ADP. The enzyme catalyses UMP + ATP = UDP + ADP. It carries out the reaction a 2'-deoxyribonucleoside 5'-diphosphate + ATP = a 2'-deoxyribonucleoside 5'-triphosphate + ADP. It catalyses the reaction a ribonucleoside 5'-diphosphate + ATP = a ribonucleoside 5'-triphosphate + ADP. Its function is as follows. Catalyzes the phosphorylation of pyrimidine nucleoside monophosphates at the expense of ATP. Plays an important role in de novo pyrimidine nucleotide biosynthesis. Has preference for UMP and CMP as phosphate acceptors. Also displays broad nucleoside diphosphate kinase activity. The protein is UMP-CMP kinase of Bos taurus (Bovine).